An 81-amino-acid chain; its full sequence is Large ribosomal subunit protein bL27 (81 aa).

The span at 1-11 (MATSKSGGSSK) shows a compositional bias: polar residues. Residues 1–21 (MATSKSGGSSKNGRDSISKRL) are disordered.

It belongs to the bacterial ribosomal protein bL27 family.

In Borrelia hermsii (strain HS1 / DAH), this protein is Large ribosomal subunit protein bL27.